Consider the following 260-residue polypeptide: Ribonuclease HII (260 aa).

Residues 71–259 enclose the RNase H type-2 domain; the sequence is RRIAGIDEAG…VREVLKASEQ (189 aa). The a divalent metal cation site is built by Asp-77, Glu-78, and Asp-169.

The protein belongs to the RNase HII family. Mn(2+) serves as cofactor. The cofactor is Mg(2+).

It is found in the cytoplasm. The catalysed reaction is Endonucleolytic cleavage to 5'-phosphomonoester.. Its function is as follows. Endonuclease that specifically degrades the RNA of RNA-DNA hybrids. The sequence is that of Ribonuclease HII from Geobacillus kaustophilus (strain HTA426).